Reading from the N-terminus, the 242-residue chain is 4-hydroxy-tetrahydrodipicolinate reductase (242 aa).

Residues 8 to 13, 75 to 77, and 99 to 102 each bind NAD(+); these read GAKGRM, GTT, and ATNM. His131 acts as the Proton donor/acceptor in catalysis. A (S)-2,3,4,5-tetrahydrodipicolinate-binding site is contributed by His132. Catalysis depends on Lys135, which acts as the Proton donor. (S)-2,3,4,5-tetrahydrodipicolinate is bound at residue 141–142; that stretch reads GT.

Belongs to the DapB family.

The protein localises to the cytoplasm. It carries out the reaction (S)-2,3,4,5-tetrahydrodipicolinate + NAD(+) + H2O = (2S,4S)-4-hydroxy-2,3,4,5-tetrahydrodipicolinate + NADH + H(+). The enzyme catalyses (S)-2,3,4,5-tetrahydrodipicolinate + NADP(+) + H2O = (2S,4S)-4-hydroxy-2,3,4,5-tetrahydrodipicolinate + NADPH + H(+). It functions in the pathway amino-acid biosynthesis; L-lysine biosynthesis via DAP pathway; (S)-tetrahydrodipicolinate from L-aspartate: step 4/4. Functionally, catalyzes the conversion of 4-hydroxy-tetrahydrodipicolinate (HTPA) to tetrahydrodipicolinate. This chain is 4-hydroxy-tetrahydrodipicolinate reductase, found in Campylobacter jejuni subsp. jejuni serotype O:2 (strain ATCC 700819 / NCTC 11168).